The sequence spans 707 residues: DNA ligase (707 aa).

Residues 48–52, 97–98, and Glu134 contribute to the NAD(+) site; these read DAEYD and SI. Lys136 (N6-AMP-lysine intermediate) is an active-site residue. The NAD(+) site is built by Arg157, Glu193, Lys320, and Lys344. 4 residues coordinate Zn(2+): Cys438, Cys441, Cys456, and Cys462. Residues 621–707 form the BRCT domain; that stretch reads VAPKPLSGKT…DSPPDERIPA (87 aa).

Belongs to the NAD-dependent DNA ligase family. LigA subfamily. It depends on Mg(2+) as a cofactor. Mn(2+) is required as a cofactor.

It catalyses the reaction NAD(+) + (deoxyribonucleotide)n-3'-hydroxyl + 5'-phospho-(deoxyribonucleotide)m = (deoxyribonucleotide)n+m + AMP + beta-nicotinamide D-nucleotide.. Functionally, DNA ligase that catalyzes the formation of phosphodiester linkages between 5'-phosphoryl and 3'-hydroxyl groups in double-stranded DNA using NAD as a coenzyme and as the energy source for the reaction. It is essential for DNA replication and repair of damaged DNA. This Polaromonas naphthalenivorans (strain CJ2) protein is DNA ligase.